Reading from the N-terminus, the 951-residue chain is Cadmium/zinc-transporting ATPase HMA2 (951 aa).

The Cytoplasmic segment spans residues 1-83; that stretch reads MASKKMTKSY…VRVTGETNFK (83 aa). One can recognise an HMA domain in the interval 7–73; the sequence is TKSYFDVLGI…ALNQAQLEAN (67 aa). Residues 84–105 traverse the membrane as a helical segment; it reads NKWPSPFAVVSGILLLLSFFKY. Residues 106–108 lie on the Extracellular side of the membrane; that stretch reads LYS. Residues 109–128 traverse the membrane as a helical segment; the sequence is PFRWLAVAAVVAGIYPILAK. Over 129-135 the chain is Cytoplasmic; that stretch reads AVASLAR. A helical transmembrane segment spans residues 136–156; that stretch reads FRIDINILVVVTVGATIGMQD. A topological domain (extracellular) is located at residue Tyr-157. The helical transmembrane segment at 158–178 threads the bilayer; the sequence is TEAAVVVFLFTIAEWLQSRAS. Residues 179 to 304 lie on the Cytoplasmic side of the membrane; the sequence is YKASAVMQSL…KTETQRFIDK (126 aa). The helical transmembrane segment at 305-327 threads the bilayer; sequence CSKYYTPAIILISICFVAIPFAL. The Extracellular segment spans residues 328–335; the sequence is KVHNLKHW. Residues 336-353 traverse the membrane as a helical segment; that stretch reads VHLALVVLVSACPCGLIL. At 354–647 the chain is on the cytoplasmic side; it reads STPVATFCAL…KLAKRAKRKV (294 aa). Catalysis depends on Asp-391, which acts as the 4-aspartylphosphate intermediate. Mg(2+) is bound by residues Asp-592 and Asp-596. A helical membrane pass occupies residues 648 to 667; it reads VENVVISITMKGAILALAFA. Residues 668 to 671 are Extracellular-facing; the sequence is GHPL. The helical transmembrane segment at 672–691 threads the bilayer; sequence IWAAVLADVGTCLLVILNSM. The Cytoplasmic segment spans residues 692 to 951; sequence LLLSDKHKTG…VGTLKEIVIE (260 aa). A compositionally biased stretch (basic and acidic residues) spans 841 to 851; it reads ELQQSCHDKPS. The disordered stretch occupies residues 841-866; sequence ELQQSCHDKPSGLDIGTGPKHEGSST.

This sequence belongs to the cation transport ATPase (P-type) (TC 3.A.3) family. Type IB subfamily. Predominantly expressed in the vascular tissues of roots, stems, and leaves. Also detected in developing anthers.

It localises to the cell membrane. The enzyme catalyses Zn(2+)(in) + ATP + H2O = Zn(2+)(out) + ADP + phosphate + H(+). It catalyses the reaction Cd(2+)(in) + ATP + H2O = Cd(2+)(out) + ADP + phosphate + H(+). Plays an important role in zinc transport and homeostasis. Could also be involved in cadmium detoxification. In Arabidopsis thaliana (Mouse-ear cress), this protein is Cadmium/zinc-transporting ATPase HMA2 (HMA2).